Reading from the N-terminus, the 210-residue chain is Prohead protease (210 aa).

Positions 1–23 are excised as a propeptide; that stretch reads MTQAAIDYNKLKSAPVHLDAYIK. Residues His76, Ser122, and Glu148 contribute to the active site. Residues 167-210 constitute a propeptide that is removed on maturation; that stretch reads SMNGHDYTEWRKSFTAISSKAVPAQERNLSELEKLAIALGYVKE.

This sequence belongs to the HK97 prohead protease protein family. Cleaves itself autocatalytically to yield the mature form of the protease.

The protein resides in the virion. Serine protease involved in capsid assembly and maturation. Cleaves the major capsid protein, the decoration protein, the portal protein to yield mature procapsids competent for DNA packaging. Acts as a trigger for assembly of the capsid protein. The chain is Prohead protease from Escherichia coli (Enterobacteria phage T5).